The primary structure comprises 625 residues: Vacuolar-sorting receptor 7 (625 aa).

The signal sequence occupies residues Met1 to Ala26. The Lumenal portion of the chain corresponds to Arg27–Ala564. The region spanning Asp58–Phe166 is the PA domain. 3 N-linked (GlcNAc...) asparagine glycosylation sites follow: Asn292, Asn400, and Asn432. EGF-like domains follow at residues Glu414 to Thr464 and Gly467 to Glu513. 7 disulfides stabilise this stretch: Cys418-Cys436, Cys425-Cys445, Cys447-Cys463, Cys471-Cys491, Cys478-Cys499, Cys501-Cys512, and Cys542-Cys555. Residues Asp514–Ile556 enclose the EGF-like 3; calcium-binding domain. The helical transmembrane segment at Trp565–Phe585 threads the bilayer. Over Tyr586–Leu625 the chain is Cytoplasmic. The Tyrosine-based internalization motif signature appears at Tyr605 to Leu608.

This sequence belongs to the VSR (BP-80) family. Expressed at low levels in seedlings, roots, young leaves, flowers and siliques.

It localises to the golgi apparatus membrane. Its function is as follows. Vacuolar-sorting receptor (VSR) involved in clathrin-coated vesicles sorting from Golgi apparatus to vacuoles. This Arabidopsis thaliana (Mouse-ear cress) protein is Vacuolar-sorting receptor 7 (VSR7).